A 610-amino-acid polypeptide reads, in one-letter code: Glutamine--fructose-6-phosphate aminotransferase [isomerizing] (610 aa).

Catalysis depends on cysteine 2, which acts as the Nucleophile; for GATase activity. The 217-residue stretch at 2 to 218 (CGIVGAVAQR…EGDVAEITRR (217 aa)) folds into the Glutamine amidotransferase type-2 domain. SIS domains lie at 286–426 (AAEI…QQGR) and 459–600 (LATD…VDQP). The For Fru-6P isomerization activity role is filled by lysine 605.

In terms of assembly, homodimer.

Its subcellular location is the cytoplasm. The enzyme catalyses D-fructose 6-phosphate + L-glutamine = D-glucosamine 6-phosphate + L-glutamate. Its function is as follows. Catalyzes the first step in hexosamine metabolism, converting fructose-6P into glucosamine-6P using glutamine as a nitrogen source. The chain is Glutamine--fructose-6-phosphate aminotransferase [isomerizing] from Vibrio vulnificus (strain CMCP6).